A 165-amino-acid chain; its full sequence is Nucleotide-binding protein SYNW1816 (165 aa).

It belongs to the YajQ family.

Nucleotide-binding protein. In Parasynechococcus marenigrum (strain WH8102), this protein is Nucleotide-binding protein SYNW1816.